The chain runs to 333 residues: L-lactate dehydrogenase A chain (333 aa).

NAD(+) is bound by residues 30–58 (GMVG…MEDK) and Arg100. The substrate site is built by Arg107, Asn139, and Arg170. Asn139 lines the NAD(+) pocket. The active-site Proton acceptor is His194. Thr249 lines the substrate pocket.

It belongs to the LDH/MDH superfamily. LDH family. Homotetramer.

It localises to the cytoplasm. The catalysed reaction is (S)-lactate + NAD(+) = pyruvate + NADH + H(+). It participates in fermentation; pyruvate fermentation to lactate; (S)-lactate from pyruvate: step 1/1. Interconverts simultaneously and stereospecifically pyruvate and lactate with concomitant interconversion of NADH and NAD(+). This is L-lactate dehydrogenase A chain (ldha) from Danio rerio (Zebrafish).